The chain runs to 1067 residues: TBC1 domain family member 31 (1067 aa).

WD repeat units follow at residues 36 to 75 (GKVVRFLHVTFDTTGDCFLAGDHHGNIYLFDISRNRFRLV), 76 to 119 (LKTG…SWMR), 120 to 161 (GHEG…KLNI), 162 to 201 (RQSVGIQKVFFLPLSNTILSCFSDDSIFAWECDTLFCKYQ), 202 to 249 (LPLP…RVIQ), and 250 to 288 (MPSQVRTIRQLEFLPDSFDGGASQTLGVLSQDGMMRFIN). The Rab-GAP TBC domain maps to 419–594 (EYPAKYRMFV…RLFDNIFSNH (176 aa)). Positions 724–773 (QQELLQKAEEQRKHVLEQEEEKLTQQRAKLAAMKRELKVKELQLLDATRR) form a coiled coil. Composition is skewed to basic and acidic residues over residues 896 to 912 (KADAERERSRGGVEELQ) and 926 to 937 (MREEAHRKKDEA). Disordered stretches follow at residues 896-955 (KADA…HSDG) and 1045-1067 (AARAKEGSSASSQTVCTPTPVSP). Polar residues-rich tracts occupy residues 941–953 (IQESLQPRPSTHS) and 1052–1067 (SSASSQTVCTPTPVSP).

Its subcellular location is the cytoplasm. It is found in the cytoskeleton. It localises to the microtubule organizing center. The protein resides in the centrosome. The protein localises to the centriolar satellite. Its subcellular location is the cilium basal body. In terms of biological role, molecular adapter which is involved in cilium biogenesis. Part of a functional complex including OFD1 a centriolar protein involved in cilium assembly. Could regulate the cAMP-dependent phosphorylation of OFD1, and its subsequent ubiquitination by PJA2 which ultimately leads to its proteasomal degradation. This chain is TBC1 domain family member 31, found in Oryzias latipes (Japanese rice fish).